The chain runs to 208 residues: Mediator of RNA polymerase II transcription subunit 18 (208 aa).

The protein belongs to the Mediator complex subunit 18 family. As to quaternary structure, component of the Mediator complex.

Its subcellular location is the nucleus. In terms of biological role, component of the Mediator complex, a coactivator involved in the regulated transcription of nearly all RNA polymerase II-dependent genes. Mediator functions as a bridge to convey information from gene-specific regulatory proteins to the basal RNA polymerase II transcription machinery. Mediator is recruited to promoters by direct interactions with regulatory proteins and serves as a scaffold for the assembly of a functional preinitiation complex with RNA polymerase II and the general transcription factors. In Xenopus laevis (African clawed frog), this protein is Mediator of RNA polymerase II transcription subunit 18 (med18).